Consider the following 318-residue polypeptide: Transaldolase (318 aa).

Lysine 132 (schiff-base intermediate with substrate) is an active-site residue.

Belongs to the transaldolase family. Type 1 subfamily. As to quaternary structure, homodimer.

Its subcellular location is the cytoplasm. It carries out the reaction D-sedoheptulose 7-phosphate + D-glyceraldehyde 3-phosphate = D-erythrose 4-phosphate + beta-D-fructose 6-phosphate. Its pathway is carbohydrate degradation; pentose phosphate pathway; D-glyceraldehyde 3-phosphate and beta-D-fructose 6-phosphate from D-ribose 5-phosphate and D-xylulose 5-phosphate (non-oxidative stage): step 2/3. Transaldolase is important for the balance of metabolites in the pentose-phosphate pathway. The chain is Transaldolase from Shewanella piezotolerans (strain WP3 / JCM 13877).